The primary structure comprises 1117 residues: Leucine-rich repeats and immunoglobulin-like domains protein 3 (1117 aa).

The signal sequence occupies residues Met1–Ala24. The region spanning Leu38–Ala74 is the LRRNT domain. LRR repeat units lie at residues Trp75–Gln98, Ser99–Ser120, Asn122–Ala143, Ser146–Gln168, Leu169–Asn189, Thr193–Leu214, Gln216–Gly237, Ala240–Gly261, Asn264–Gly285, Met288–Phe309, Lys312–Gly333, Leu336–Gly357, Ser360–Phe382, Arg387–Gly408, and Thr411–Gln432. The N-linked (GlcNAc...) asparagine glycan is linked to Asn156. Residue Asn274 is glycosylated (N-linked (GlcNAc...) asparagine). Residues Asn442 and Asn469 are each glycosylated (N-linked (GlcNAc...) asparagine). Residues Ser444–Asp495 enclose the LRRCT domain. Ig-like C2-type domains follow at residues Pro499–Thr598, Pro603–Thr692, and Pro697–Ser783. 2 disulfides stabilise this stretch: Cys520–Cys581 and Cys624–Cys676. 2 N-linked (GlcNAc...) asparagine glycosylation sites follow: Asn688 and Asn729. The cysteines at positions 718 and 767 are disulfide-linked. A helical transmembrane segment spans residues Val810–Ile830. An N-linked (GlcNAc...) asparagine glycan is attached at Asn1014. The interval Asp1019–Asn1093 is disordered. Residues Asp1083–Asn1093 are compositionally biased toward basic and acidic residues.

Interacts with EGFR, ERBB2 and ERBB4 (in vitro). Widely expressed.

It localises to the cell membrane. Its subcellular location is the cytoplasmic vesicle membrane. In terms of biological role, plays a role in craniofacial and inner ear morphogenesis during embryonic development. Acts within the otic vesicle epithelium to control formation of the lateral semicircular canal in the inner ear, possibly by restricting the expression of NTN1. This chain is Leucine-rich repeats and immunoglobulin-like domains protein 3 (Lrig3), found in Mus musculus (Mouse).